The following is a 1038-amino-acid chain: E3 ubiquitin-protein ligase Topors (1038 aa).

The disordered stretch occupies residues 53-96 (ESGSESGDNEAEEPVSAGPDNANAIGEPGTSASAAEENGTVERN). The RING-type zinc finger occupies 102–141 (CAICLSRCRRKCFTDSCMHQFCFKCLCEWSKIKPECPLCK). The interaction with hairy/hry stretch occupies residues 495 to 682 (AAANAEVAAI…SSDSSTTNSE (188 aa)). 2 disordered regions span residues 627–858 (DQLR…SSTA) and 972–1038 (GESE…LLPY). Residues 633 to 642 (RSIRSKKSRR) are compositionally biased toward basic residues. A compositionally biased stretch (low complexity) spans 643–668 (SSMPARSDSGSSPSSCSSSSFHFSSS). Residues 686 to 699 (KKSRKRVANNKRSK) are compositionally biased toward basic residues. A compositionally biased stretch (low complexity) spans 723–744 (QQQISQKKPQRQPESSSDSPSS). Positions 792–801 (ATLEDRKPVK) are enriched in basic and acidic residues. Thr-820 is subject to Phosphothreonine. The residue at position 822 (Ser-822) is a Phosphoserine. Positions 841 to 858 (SHSNQSSQSASLASSSTA) are enriched in low complexity. The segment covering 987–1031 (EEQDEEDEEDEDQEEDDQEEEKAAEEEEEEEEDDDDSDNHDENDE) has biased composition (acidic residues).

Interacts with hairy/hry, p53 and Top1. Interacts with the gypsy chromatin insulator complex, composed of Cp190, mod(mdg4) and su(Hw); interacts directly with mod(mdg4) and su(Hw). Interacts with Lam/lamin.

The protein resides in the nucleus. It localises to the chromosome. The catalysed reaction is S-ubiquitinyl-[E2 ubiquitin-conjugating enzyme]-L-cysteine + [acceptor protein]-L-lysine = [E2 ubiquitin-conjugating enzyme]-L-cysteine + N(6)-ubiquitinyl-[acceptor protein]-L-lysine.. In terms of biological role, functions as a ubiquitin-protein E3 ligase. Negatively regulates the transcriptional repressor hairy/hry by promoting its ubiquitination and subsequent degradation. Also directs the nuclear organization of the gypsy chromatin insulator. Chromatin insulators are regulatory elements which establish independent domains of transcriptional activity within eukaryotic genomes. Insulators have two defining properties; they can block the communication between an enhancer and a promoter when placed between them, and can also buffer transgenes from position effect variegation (PEV). Insulators are proposed to structure the chromatin fiber into independent domains of differing transcriptional potential by promoting the formation of distinct chromatin loops. This chromatin looping may require the formation of insulator bodies, where homotypic interactions between individual subunits of the insulator complex could promote the clustering of widely spaced insulators at the nuclear periphery. Within the gypsy insulator complex, this protein may promote formation of nuclear insulator bodies by recruiting individual insulator complexes to the nuclear lamina. This chain is E3 ubiquitin-protein ligase Topors (Topors), found in Drosophila melanogaster (Fruit fly).